The following is a 200-amino-acid chain: AP-5 complex subunit sigma-1 (200 aa).

In terms of assembly, probably part of the adaptor protein complex 5 (AP-5) a tetramer composed of AP5B1, AP5M1, AP5S1 and AP5Z1. Interacts with ZFYVE26 and SPG11.

It localises to the cytoplasm. The protein resides in the cytosol. The protein localises to the late endosome membrane. It is found in the lysosome membrane. Its function is as follows. As part of AP-5, a probable fifth adaptor protein complex it may be involved in endosomal transport. According to PubMed:20613862, it is required for efficient homologous recombination DNA double-strand break repair. The sequence is that of AP-5 complex subunit sigma-1 (AP5S1) from Homo sapiens (Human).